We begin with the raw amino-acid sequence, 418 residues long: Trimethyllysine dioxygenase, mitochondrial (418 aa).

The Fe cation site is built by histidine 239, aspartate 241, and histidine 386.

This sequence belongs to the gamma-BBH/TMLD family. As to quaternary structure, homodimer. Requires Fe(2+) as cofactor. The cofactor is L-ascorbate.

It localises to the mitochondrion matrix. The catalysed reaction is N(6),N(6),N(6)-trimethyl-L-lysine + 2-oxoglutarate + O2 = (3S)-3-hydroxy-N(6),N(6),N(6)-trimethyl-L-lysine + succinate + CO2. It participates in amine and polyamine biosynthesis; carnitine biosynthesis. Functionally, converts trimethyllysine (TML) into hydroxytrimethyllysine (HTML). The chain is Trimethyllysine dioxygenase, mitochondrial (TMLHE) from Gallus gallus (Chicken).